Here is a 365-residue protein sequence, read N- to C-terminus: 4-hydroxy-tetrahydrodipicolinate synthase 1, chloroplastic (365 aa).

The transit peptide at 1–39 (MSALKNYGLISIDSALHFPRSNQLQSYKRRNAKWVSPIA) directs the protein to the chloroplast. Thr108 is a binding site for pyruvate. The active-site Proton donor/acceptor is the Tyr194. The active-site Schiff-base intermediate with substrate is Lys222. Ile261 is a pyruvate binding site.

Belongs to the DapA family.

It is found in the plastid. The protein localises to the chloroplast. It catalyses the reaction L-aspartate 4-semialdehyde + pyruvate = (2S,4S)-4-hydroxy-2,3,4,5-tetrahydrodipicolinate + H2O + H(+). Its pathway is amino-acid biosynthesis; L-lysine biosynthesis via DAP pathway; (S)-tetrahydrodipicolinate from L-aspartate: step 3/4. Functionally, catalyzes the condensation of (S)-aspartate-beta-semialdehyde [(S)-ASA] and pyruvate to 4-hydroxy-tetrahydrodipicolinate (HTPA). In Arabidopsis thaliana (Mouse-ear cress), this protein is 4-hydroxy-tetrahydrodipicolinate synthase 1, chloroplastic (DHDPS1).